Here is a 587-residue protein sequence, read N- to C-terminus: Protein FRIGIDA-ESSENTIAL 1 (587 aa).

The segment at lysine 96–glutamate 123 adopts a C3H1-type zinc-finger fold. Disordered stretches follow at residues aspartate 264–isoleucine 346, glycine 368–threonine 421, and isoleucine 467–isoleucine 492. A compositionally biased stretch (low complexity) spans asparagine 294 to leucine 304. The segment covering alanine 470–aspartate 479 has biased composition (basic and acidic residues).

In terms of assembly, component of the transcription activator complex FRI-C composed of FRI, FRL1, SUF4, FLX and FES1. Interacts with FLX, (via C-terminus) with FRI (via C-terminus), and with RIN1, a component of the SWR1 chromatin-remodeling complex. As to expression, expressed in root and shoot apices and vasculature.

The protein resides in the nucleus. Functionally, transcriptional activator involved in the FRIGIDA-mediated vernalization pathway, but not in the autonomous flowering pathway. Acts cooperatively with FRI (FRIGIDA) or FRL1 (FRIGIDA-LIKE 1) to promote FLC (FLOWERING LOCUS C) expression. Required for the stabilization of the FRI-C complex. This is Protein FRIGIDA-ESSENTIAL 1 (FES1) from Arabidopsis thaliana (Mouse-ear cress).